Here is a 254-residue protein sequence, read N- to C-terminus: Triosephosphate isomerase (254 aa).

Residue 12-14 (NWK) participates in substrate binding. Histidine 99 functions as the Electrophile in the catalytic mechanism. The active-site Proton acceptor is glutamate 169. Residues glycine 175, serine 214, and 235 to 236 (GG) each bind substrate.

It belongs to the triosephosphate isomerase family. In terms of assembly, homodimer.

Its subcellular location is the cytoplasm. The enzyme catalyses D-glyceraldehyde 3-phosphate = dihydroxyacetone phosphate. The protein operates within carbohydrate biosynthesis; gluconeogenesis. It functions in the pathway carbohydrate degradation; glycolysis; D-glyceraldehyde 3-phosphate from glycerone phosphate: step 1/1. In terms of biological role, involved in the gluconeogenesis. Catalyzes stereospecifically the conversion of dihydroxyacetone phosphate (DHAP) to D-glyceraldehyde-3-phosphate (G3P). The polypeptide is Triosephosphate isomerase (Bartonella bacilliformis (strain ATCC 35685 / KC583 / Herrer 020/F12,63)).